The sequence spans 378 residues: D-alanine--D-alanine ligase (378 aa).

The 207-residue stretch at 141-347 (KKLLTLNGIR…YSELIDQLIQ (207 aa)) folds into the ATP-grasp domain. ATP is bound at residue 171–226 (AEELGETLFVKPARQGSSVGIHKVRNEEEYNAALEDGFKYDYKILVEEAIKNPREV). Residues Asp301, Glu314, and Asn316 each contribute to the Mg(2+) site.

Belongs to the D-alanine--D-alanine ligase family. It depends on Mg(2+) as a cofactor. Mn(2+) serves as cofactor.

The protein resides in the cytoplasm. It carries out the reaction 2 D-alanine + ATP = D-alanyl-D-alanine + ADP + phosphate + H(+). Its pathway is cell wall biogenesis; peptidoglycan biosynthesis. Functionally, cell wall formation. The protein is D-alanine--D-alanine ligase of Ligilactobacillus salivarius (strain UCC118) (Lactobacillus salivarius).